The sequence spans 244 residues: MGALGLEGRGGRLQGRGSLLLAVAGATSLVTLLLAVPITVLAVLALVPQDQGGLVTETADPGAQAQQGLGFQKLPEEEPETDLSPGLPAAHLIGAPLKGQGLGWETTKEQAFLTSGTQFSDAEGLALPQDGLYYLYCLVGYRGRTPPGGGDPQGRSVTLRSSLYRAGGAYGPGTPELLLEGAETVTPVLDPARRQGYGPLWYTSVGFGGLVQLRRGERVYVNISHPDMVDFARGKTFFGAVMVG.

At 1–18 the chain is on the cytoplasmic side; that stretch reads MGALGLEGRGGRLQGRGS. Residues 19-48 traverse the membrane as a helical; Signal-anchor for type II membrane protein segment; it reads LLLAVAGATSLVTLLLAVPITVLAVLALVP. Residues 49–244 lie on the Extracellular side of the membrane; it reads QDQGGLVTET…KTFFGAVMVG (196 aa). Positions 88–243 constitute a THD domain; it reads PAAHLIGAPL…GKTFFGAVMV (156 aa). Asn-222 carries an N-linked (GlcNAc...) asparagine glycan.

This sequence belongs to the tumor necrosis factor family. In terms of assembly, heterotrimer of either two LTB and one LTA subunits or (less prevalent) two LTA and one LTB subunits.

The protein resides in the membrane. Its function is as follows. Cytokine that binds to LTBR/TNFRSF3. May play a specific role in immune response regulation. Provides the membrane anchor for the attachment of the heterotrimeric complex to the cell surface. The chain is Lymphotoxin-beta (LTB) from Pan troglodytes (Chimpanzee).